The following is a 335-amino-acid chain: D-alanine--D-alanine ligase (335 aa).

An ATP-grasp domain is found at 124 to 329 (KMWFSALGVP…FTHYLYSNIK (206 aa)). Position 154–209 (154–209 (ALENWGSIFIKAASQGSSVGCYRVDSQDELVSSLEQAFSFSPYVIVEKTINARELE)) interacts with ATP. Positions 283, 296, and 298 each coordinate Mg(2+).

It belongs to the D-alanine--D-alanine ligase family. The cofactor is Mg(2+). Mn(2+) is required as a cofactor.

It localises to the cytoplasm. The catalysed reaction is 2 D-alanine + ATP = D-alanyl-D-alanine + ADP + phosphate + H(+). Its pathway is cell wall biogenesis; peptidoglycan biosynthesis. Cell wall formation. The chain is D-alanine--D-alanine ligase from Shewanella woodyi (strain ATCC 51908 / MS32).